A 449-amino-acid chain; its full sequence is Phosphoglucosamine mutase (449 aa).

The Phosphoserine intermediate role is filled by serine 102. Positions 102, 243, 245, and 247 each coordinate Mg(2+). Position 102 is a phosphoserine (serine 102).

This sequence belongs to the phosphohexose mutase family. Mg(2+) serves as cofactor. Post-translationally, activated by phosphorylation.

The enzyme catalyses alpha-D-glucosamine 1-phosphate = D-glucosamine 6-phosphate. Functionally, catalyzes the conversion of glucosamine-6-phosphate to glucosamine-1-phosphate. This chain is Phosphoglucosamine mutase, found in Maricaulis maris (strain MCS10) (Caulobacter maris).